The sequence spans 445 residues: Phosphoglucosamine mutase (445 aa).

Ser-102 (phosphoserine intermediate) is an active-site residue. Mg(2+) is bound by residues Ser-102, Asp-240, Asp-242, and Asp-244. The residue at position 102 (Ser-102) is a Phosphoserine.

It belongs to the phosphohexose mutase family. Mg(2+) is required as a cofactor. Activated by phosphorylation.

The enzyme catalyses alpha-D-glucosamine 1-phosphate = D-glucosamine 6-phosphate. Its function is as follows. Catalyzes the conversion of glucosamine-6-phosphate to glucosamine-1-phosphate. This Mycobacterium marinum (strain ATCC BAA-535 / M) protein is Phosphoglucosamine mutase.